A 68-amino-acid polypeptide reads, in one-letter code: Molybdenum-pterin-binding protein 1 (68 aa).

A Mop domain is found at 2–68 (SISARNQLKG…IKSTDVMILA (67 aa)).

Binds one mole of molybdenum per mole of protein and contains a pterin. The chain is Molybdenum-pterin-binding protein 1 (mopI) from Clostridium pasteurianum.